We begin with the raw amino-acid sequence, 430 residues long: Probable WRKY transcription factor 14 (430 aa).

Residues 211 to 277 (SGEVVPSDLW…YTSEHNHPWP (67 aa)) constitute a DNA-binding region (WRKY). A disordered region spans residues 283-366 (LAGSTRSSTS…APYRPELHDH (84 aa)). Low complexity predominate over residues 286 to 306 (STRSSTSSSSNPNPSKPSTAN). A compositionally biased stretch (polar residues) spans 307–319 (VNSSSIGSQNTIY). A compositionally biased stretch (acidic residues) spans 340–354 (GDDMELENVDDDDDN).

This sequence belongs to the WRKY group II-e family.

It is found in the nucleus. Its function is as follows. Transcription factor. Interacts specifically with the W box (5'-(T)TGAC[CT]-3'), a frequently occurring elicitor-responsive cis-acting element. This is Probable WRKY transcription factor 14 (WRKY14) from Arabidopsis thaliana (Mouse-ear cress).